A 115-amino-acid polypeptide reads, in one-letter code: U3-lycotoxin-Ls1v (115 aa).

The signal sequence occupies residues 1–20 (MKFVLLFGVLLVTLFSHSSA). Positions 21-44 (EMLDDFDQADEDELLSLIEKEEAR) are excised as a propeptide. Cystine bridges form between cysteine 48/cysteine 63, cysteine 55/cysteine 72, cysteine 62/cysteine 87, and cysteine 74/cysteine 85.

The protein belongs to the neurotoxin 19 (CSTX) family. 01 subfamily. As to expression, expressed by the venom gland.

It localises to the secreted. This chain is U3-lycotoxin-Ls1v, found in Lycosa singoriensis (Wolf spider).